We begin with the raw amino-acid sequence, 186 residues long: Potassium-transporting ATPase KdpC subunit (186 aa).

A helical transmembrane segment spans residues 9–29 (AAVVLFGGCLLVLGLLYPLAM).

It belongs to the KdpC family. The system is composed of three essential subunits: KdpA, KdpB and KdpC.

The protein localises to the cell membrane. In terms of biological role, part of the high-affinity ATP-driven potassium transport (or Kdp) system, which catalyzes the hydrolysis of ATP coupled with the electrogenic transport of potassium into the cytoplasm. This subunit acts as a catalytic chaperone that increases the ATP-binding affinity of the ATP-hydrolyzing subunit KdpB by the formation of a transient KdpB/KdpC/ATP ternary complex. In Methanosphaerula palustris (strain ATCC BAA-1556 / DSM 19958 / E1-9c), this protein is Potassium-transporting ATPase KdpC subunit.